Reading from the N-terminus, the 1133-residue chain is DNA-directed RNA polymerase subunit beta (1133 aa).

Residues 1085–1133 are disordered; it reads ADVSSRHTPSRPTYESVTSEDLSPAAGGTFTLARRSREEDEDREEEDDF. Polar residues predominate over residues 1090-1105; the sequence is RHTPSRPTYESVTSED. Acidic residues predominate over residues 1123-1133; that stretch reads EDEDREEEDDF.

This sequence belongs to the RNA polymerase beta chain family. As to quaternary structure, in cyanobacteria the RNAP catalytic core is composed of 2 alpha, 1 beta, 1 beta', 1 gamma and 1 omega subunit. When a sigma factor is associated with the core the holoenzyme is formed, which can initiate transcription.

The enzyme catalyses RNA(n) + a ribonucleoside 5'-triphosphate = RNA(n+1) + diphosphate. Its function is as follows. DNA-dependent RNA polymerase catalyzes the transcription of DNA into RNA using the four ribonucleoside triphosphates as substrates. The protein is DNA-directed RNA polymerase subunit beta of Synechococcus sp. (strain JA-3-3Ab) (Cyanobacteria bacterium Yellowstone A-Prime).